A 303-amino-acid chain; its full sequence is Pyridoxal 5'-phosphate synthase subunit PdxS (303 aa).

Aspartate 33 contacts D-ribose 5-phosphate. The active-site Schiff-base intermediate with D-ribose 5-phosphate is the lysine 90. Glycine 162 serves as a coordination point for D-ribose 5-phosphate. D-glyceraldehyde 3-phosphate is bound at residue arginine 174. D-ribose 5-phosphate is bound by residues glycine 223 and 244–245 (GS).

It belongs to the PdxS/SNZ family. As to quaternary structure, in the presence of PdxT, forms a dodecamer of heterodimers.

The enzyme catalyses aldehydo-D-ribose 5-phosphate + D-glyceraldehyde 3-phosphate + L-glutamine = pyridoxal 5'-phosphate + L-glutamate + phosphate + 3 H2O + H(+). Its pathway is cofactor biosynthesis; pyridoxal 5'-phosphate biosynthesis. Its function is as follows. Catalyzes the formation of pyridoxal 5'-phosphate from ribose 5-phosphate (RBP), glyceraldehyde 3-phosphate (G3P) and ammonia. The ammonia is provided by the PdxT subunit. Can also use ribulose 5-phosphate and dihydroxyacetone phosphate as substrates, resulting from enzyme-catalyzed isomerization of RBP and G3P, respectively. The chain is Pyridoxal 5'-phosphate synthase subunit PdxS from Streptomyces coelicolor (strain ATCC BAA-471 / A3(2) / M145).